We begin with the raw amino-acid sequence, 339 residues long: Dihydroorotate dehydrogenase (quinone) (339 aa).

Residues 64–68 and threonine 88 contribute to the FMN site; that span reads AGADK. Residue lysine 68 participates in substrate binding. Position 113–117 (113–117) interacts with substrate; the sequence is NRNGF. FMN-binding residues include asparagine 141 and asparagine 174. Asparagine 174 provides a ligand contact to substrate. The active-site Nucleophile is serine 177. Asparagine 179 serves as a coordination point for substrate. 2 residues coordinate FMN: lysine 219 and threonine 247. Residue 248–249 coordinates substrate; that stretch reads NT. FMN is bound by residues glycine 270, glycine 299, and 320–321; that span reads YS.

The protein belongs to the dihydroorotate dehydrogenase family. Type 2 subfamily. As to quaternary structure, monomer. The cofactor is FMN.

It localises to the cell membrane. It carries out the reaction (S)-dihydroorotate + a quinone = orotate + a quinol. Its pathway is pyrimidine metabolism; UMP biosynthesis via de novo pathway; orotate from (S)-dihydroorotate (quinone route): step 1/1. In terms of biological role, catalyzes the conversion of dihydroorotate to orotate with quinone as electron acceptor. The polypeptide is Dihydroorotate dehydrogenase (quinone) (Haemophilus influenzae (strain 86-028NP)).